The chain runs to 75 residues: MGKMKILKKLLSKKGQLSMEVGVLVAAAVLVAIIAAYFYVKNAKSAVASAGNKSAAFINVTANKSQEYISNLSNI.

A propeptide spanning residues 1 to 15 (MGKMKILKKLLSKKG) is cleaved from the precursor. The QXSXEXXXL signature appears at 16 to 24 (QLSMEVGVL).

In terms of processing, the N-terminus is cleaved by the prepilin peptidase EppA, which recognizes the class III signal sequence.

It localises to the secreted. The protein resides in the cell surface. The protein localises to the fimbrium. The polypeptide is Probable pilin MJ0431 (Methanocaldococcus jannaschii (strain ATCC 43067 / DSM 2661 / JAL-1 / JCM 10045 / NBRC 100440) (Methanococcus jannaschii)).